A 555-amino-acid chain; its full sequence is CTP synthase (555 aa).

The segment at 1–271 (MVKRGKKTKY…DDKLAELFNI (271 aa)) is amidoligase domain. Ser19 is a binding site for CTP. Position 19 (Ser19) interacts with UTP. Residues 20–25 (SLGKGL) and Asp77 each bind ATP. Mg(2+) is bound by residues Asp77 and Glu145. CTP is bound by residues 152 to 154 (DIE), 192 to 197 (KTKPTQ), and Lys228. UTP is bound by residues 192–197 (KTKPTQ) and Lys228. Residues 297 to 537 (RIGIVGKYVE…VKAALEHRDA (241 aa)) form the Glutamine amidotransferase type-1 domain. Gly358 lines the L-glutamine pocket. Cys385 (nucleophile; for glutamine hydrolysis) is an active-site residue. L-glutamine is bound by residues 386–389 (LGLQ), Glu409, and Arg466. Catalysis depends on residues His510 and Glu512. A disordered region spans residues 535–555 (RDAQQRQPPAEVKKLAVGKNG).

It belongs to the CTP synthase family. As to quaternary structure, homotetramer.

The enzyme catalyses UTP + L-glutamine + ATP + H2O = CTP + L-glutamate + ADP + phosphate + 2 H(+). The catalysed reaction is L-glutamine + H2O = L-glutamate + NH4(+). It carries out the reaction UTP + NH4(+) + ATP = CTP + ADP + phosphate + 2 H(+). It functions in the pathway pyrimidine metabolism; CTP biosynthesis via de novo pathway; CTP from UDP: step 2/2. Its activity is regulated as follows. Allosterically activated by GTP, when glutamine is the substrate; GTP has no effect on the reaction when ammonia is the substrate. The allosteric effector GTP functions by stabilizing the protein conformation that binds the tetrahedral intermediate(s) formed during glutamine hydrolysis. Inhibited by the product CTP, via allosteric rather than competitive inhibition. Catalyzes the ATP-dependent amination of UTP to CTP with either L-glutamine or ammonia as the source of nitrogen. Regulates intracellular CTP levels through interactions with the four ribonucleotide triphosphates. This chain is CTP synthase, found in Anaeromyxobacter sp. (strain K).